A 402-amino-acid polypeptide reads, in one-letter code: MRILYLDPFSGISGDMFLGLLVDLGVDPEKIKSRLEKLNVEFEFVVKKENKKGVTATKVDVVFPGKEHHEDHIVSDHDHHHHHGRHLSEIVEVLSRLEDPLKEKAIRMFETLAEAESKIHGLSKEKVHFHEVGAMDAVIEIAGAVAGLELLGVEKVFCGTVNTGSGFVMTEHGRYPVPAPATAELLKGIPIYVDQKVRTELVTPTGAVILKSLVDEFRTPILRVEKVGYGAGTMDLEIPNVLRGYLGYIEPSERTGDVLIETNVDDMSPQLFGHLMERLFEAGAKDVFFTPIYMKKNRPAVKVSVLCHESKKDEILKLLFKESTSIGARVFYPEKVEATRTVKTVKTEYGEIPVKIASFDSEIVNISPEYEACKKIAQEKGIPLKEVYRAVCKSVSEVRDDV.

This sequence belongs to the LarC family.

It carries out the reaction Ni(II)-pyridinium-3,5-bisthiocarboxylate mononucleotide = pyridinium-3,5-bisthiocarboxylate mononucleotide + Ni(2+). In terms of biological role, involved in the biosynthesis of a nickel-pincer cofactor ((SCS)Ni(II) pincer complex). Binds Ni(2+), and functions in nickel delivery to pyridinium-3,5-bisthiocarboxylic acid mononucleotide (P2TMN), to form the mature cofactor. Is thus probably required for the activation of nickel-pincer cofactor-dependent enzymes. This chain is Pyridinium-3,5-bisthiocarboxylic acid mononucleotide nickel insertion protein, found in Thermotoga sp. (strain RQ2).